Here is a 381-residue protein sequence, read N- to C-terminus: Probable peptidoglycan glycosyltransferase FtsW (381 aa).

A run of 9 helical transmembrane segments spans residues 16-36 (LVLLLMVVALTSFGIVMVYSA), 56-76 (LIFALVGCVGALVTMRIDYQL), 80-100 (WAVPLLFVSLILLVLVLIPGI), 145-165 (LLSAGFLPYMVVLMILLGLLL), 168-188 (PDMGAALTLAAVTIIMLFAAG), 191-211 (LIFILGSGMVAMPFVVYLVVH), 274-294 (VIGEELGFIGVIVIIGMFFIL), 312-332 (FLALGIAVLFAIEAVVNMAVV), and 343-363 (LPFLSYGGSSLLISLFAVGIL).

Belongs to the SEDS family. FtsW subfamily.

The protein resides in the cell inner membrane. It carries out the reaction [GlcNAc-(1-&gt;4)-Mur2Ac(oyl-L-Ala-gamma-D-Glu-L-Lys-D-Ala-D-Ala)](n)-di-trans,octa-cis-undecaprenyl diphosphate + beta-D-GlcNAc-(1-&gt;4)-Mur2Ac(oyl-L-Ala-gamma-D-Glu-L-Lys-D-Ala-D-Ala)-di-trans,octa-cis-undecaprenyl diphosphate = [GlcNAc-(1-&gt;4)-Mur2Ac(oyl-L-Ala-gamma-D-Glu-L-Lys-D-Ala-D-Ala)](n+1)-di-trans,octa-cis-undecaprenyl diphosphate + di-trans,octa-cis-undecaprenyl diphosphate + H(+). It participates in cell wall biogenesis; peptidoglycan biosynthesis. Functionally, peptidoglycan polymerase that is essential for cell division. The polypeptide is Probable peptidoglycan glycosyltransferase FtsW (Trichlorobacter lovleyi (strain ATCC BAA-1151 / DSM 17278 / SZ) (Geobacter lovleyi)).